We begin with the raw amino-acid sequence, 1052 residues long: Lateral signaling target protein 2 homolog (1052 aa).

Disordered regions lie at residues 311–348 (YSSI…TSPH), 379–455 (PSML…DSDS), 506–539 (DEFG…STSA), 551–678 (LRLP…ASSF), and 814–973 (NTID…IPDG). Composition is skewed to low complexity over residues 312-346 (SSIE…STTS), 379-392 (PSML…TPTA), and 400-419 (PSHS…NPPA). Positions 422 to 455 (SEDDDDDDEEREDDEEECGMLDSDEQDLNDDSDS) are enriched in acidic residues. Positions 554 to 574 (PSSSSENEQTTGSNQQSTIKT) are enriched in polar residues. 2 positions are modified to phosphoserine: S555 and S556. Composition is skewed to basic residues over residues 588–614 (RQRH…HHQQ) and 625–644 (SHHH…ARKR). Residues 652-661 (STTAEQQQTI) show a composition bias toward polar residues. The segment covering 824–842 (NNNNNNNNNSGSSSSSNSS) has biased composition (low complexity). S854 carries the post-translational modification Phosphoserine. Residues 872–915 (QQQQQQQAQLQLQMQRQRNNSVGSNSPSSSSSSSSSSEHNSPIS) are compositionally biased toward low complexity. Residues 926-935 (SNSASMPSIG) are compositionally biased toward polar residues. Low complexity predominate over residues 936–963 (STATTAAATAAATATTTTSATTTTTTTT). The FYVE-type zinc-finger motif lies at 972-1032 (DGKAPRCMSC…VCRECYVREV (61 aa)). 8 residues coordinate Zn(2+): C978, C981, C994, C997, C1002, C1005, C1024, and C1027.

This sequence belongs to the lst-2 family.

Functionally, negative regulator of epidermal growth factor receptor (EGFR) signaling. The chain is Lateral signaling target protein 2 homolog from Drosophila virilis (Fruit fly).